A 100-amino-acid chain; its full sequence is Urease subunit gamma (100 aa).

Belongs to the urease gamma subunit family. As to quaternary structure, heterotrimer of UreA (gamma), UreB (beta) and UreC (alpha) subunits. Three heterotrimers associate to form the active enzyme.

The protein localises to the cytoplasm. It carries out the reaction urea + 2 H2O + H(+) = hydrogencarbonate + 2 NH4(+). Its pathway is nitrogen metabolism; urea degradation; CO(2) and NH(3) from urea (urease route): step 1/1. This chain is Urease subunit gamma, found in Pseudomonas fluorescens (strain ATCC BAA-477 / NRRL B-23932 / Pf-5).